Here is a 309-residue protein sequence, read N- to C-terminus: MQRNNFTEVIEFVFLGFSSFGKHQITLFVVFLTIYILTLAGNIIIVTITHIDHHLHTPMYFFLSMLASSETVYTLVIVPRMLSSLIFYNLPISLAGCATQMFFFVTLATNNCFLLTAMGYDRYVAICNPLRYTIIMSKGMCALLVCGSLGTGLVMAVLHVPAMFHLPFCGTVVEHFFCDIYPVMKLSCVDTTVNEIINYGVSSFVILVPIGLIFISYVLIVSSILKIVSTEGQKKAFATCASHLTVVIVHYGCASIAYLKPKSESSVEKDLLLSVTYTIITPLLNPVVYSLRNKEVKDALCRAVGRNTS.

Residues 1–27 lie on the Extracellular side of the membrane; it reads MQRNNFTEVIEFVFLGFSSFGKHQITL. The chain crosses the membrane as a helical span at residues 28–48; it reads FVVFLTIYILTLAGNIIIVTI. The Cytoplasmic segment spans residues 49–57; sequence THIDHHLHT. The helical transmembrane segment at 58 to 78 threads the bilayer; it reads PMYFFLSMLASSETVYTLVIV. At 79 to 84 the chain is on the extracellular side; it reads PRMLSS. The chain crosses the membrane as a helical span at residues 85–105; the sequence is LIFYNLPISLAGCATQMFFFV. A disulfide bridge connects residues C97 and C178. The Cytoplasmic segment spans residues 106–131; sequence TLATNNCFLLTAMGYDRYVAICNPLR. Residues 132–152 traverse the membrane as a helical segment; the sequence is YTIIMSKGMCALLVCGSLGTG. Topologically, residues 153-203 are extracellular; the sequence is LVMAVLHVPAMFHLPFCGTVVEHFFCDIYPVMKLSCVDTTVNEIINYGVSS. Residues 204–224 traverse the membrane as a helical segment; that stretch reads FVILVPIGLIFISYVLIVSSI. The Cytoplasmic segment spans residues 225–235; it reads LKIVSTEGQKK. A helical transmembrane segment spans residues 236-256; that stretch reads AFATCASHLTVVIVHYGCASI. The Extracellular portion of the chain corresponds to 257-270; sequence AYLKPKSESSVEKD. A helical transmembrane segment spans residues 271–291; that stretch reads LLLSVTYTIITPLLNPVVYSL. The Cytoplasmic segment spans residues 292 to 309; that stretch reads RNKEVKDALCRAVGRNTS.

This sequence belongs to the G-protein coupled receptor 1 family. As to expression, expressed in the olfactory epithelium as well as in the testis. Expressed in round spermatids during stages VI-VIII of spermatogenesis.

The protein localises to the cell membrane. Functionally, olfactory receptor. Activated by the synthetic floral odorant, lyral, and by alpha-cedrene, a sesquiterpene constituent of cedarwood oil. Its activation increases intracellular Ca(2+). Acts as a key regulator of myogenesis through its actions on cell migration and adhesion by activating the Ca(2+)-dependent AKT signal transduction pathway. Also acts as a regulator of angiogenesis. Moreover, plays a role in the regulation of lipid accumulation in hepatocytes via the cAMP-PKA pathway. Involved in sperm chemotaxis and motility. This chain is Olfactory receptor 10J5, found in Mus musculus (Mouse).